A 681-amino-acid chain; its full sequence is tRNA wybutosine-synthesizing protein 4 (681 aa).

Basic residues predominate over residues 1-11; the sequence is MSNKNQRKTKS. The interval 1-21 is disordered; sequence MSNKNQRKTKSKDREVRKTND. Residues arginine 66, glycine 92, aspartate 119, 165-166, and glutamate 193 contribute to the S-adenosyl-L-methionine site; that span reads NL.

This sequence belongs to the methyltransferase superfamily. LCMT family.

It carries out the reaction 7-[(3S)-3-amino-3-carboxypropyl]wyosine(37) in tRNA(Phe) + S-adenosyl-L-methionine = 7-[(3S)-(3-amino-3-methoxycarbonyl)propyl]wyosine(37) in tRNA(Phe) + S-adenosyl-L-homocysteine. It catalyses the reaction 7-[(3S)-(3-amino-3-methoxycarbonyl)propyl]wyosine(37) in tRNA(Phe) + S-adenosyl-L-methionine + CO2 = wybutosine(37) in tRNA(Phe) + S-adenosyl-L-homocysteine + 2 H(+). It functions in the pathway tRNA modification; wybutosine-tRNA(Phe) biosynthesis. Functionally, probable S-adenosyl-L-methionine-dependent methyltransferase that acts as a component of the wybutosine biosynthesis pathway. Wybutosine is a hyper modified guanosine with a tricyclic base found at the 3'-position adjacent to the anticodon of eukaryotic phenylalanine tRNA. May methylate the carboxyl group of leucine residues to form alpha-leucine ester residues. This Schizosaccharomyces pombe (strain 972 / ATCC 24843) (Fission yeast) protein is tRNA wybutosine-synthesizing protein 4 (ppm2).